Here is a 345-residue protein sequence, read N- to C-terminus: Cuticle collagen 14 (345 aa).

3 triple-helical region regions span residues glycine 156 to proline 185, glycine 207 to tyrosine 263, and glycine 268 to cysteine 333. Residues alanine 161–tyrosine 345 form a disordered region. Composition is skewed to pro residues over residues isoleucine 179–aspartate 191, proline 198–alanine 223, and arginine 278–proline 290. Residues glycine 292 to glycine 304 show a composition bias toward gly residues.

The protein belongs to the cuticular collagen family. Collagen polypeptide chains are complexed within the cuticle by disulfide bonds and other types of covalent cross-links.

Nematode cuticles are composed largely of collagen-like proteins. The cuticle functions both as an exoskeleton and as a barrier to protect the worm from its environment. This is Cuticle collagen 14 (col-14) from Caenorhabditis elegans.